We begin with the raw amino-acid sequence, 382 residues long: LIM homeobox transcription factor 1-alpha (382 aa).

LIM zinc-binding domains lie at 33 to 92 (SVCE…LFAV) and 92 to 154 (VKCG…EREL). 2 disordered regions span residues 161–208 (AASD…QQRR) and 252–285 (KLAR…GMEG). Residues 195-254 (PKRPRTILTTQQRRAFKASFEVSSKPCRKVRETLAAETGLSVRVVQVWFQNQRAKMKKLA) constitute a DNA-binding region (homeobox). Low complexity predominate over residues 256-269 (RQQQQQQDQQNTQR).

As to expression, isoform 1 is expressed in many tissues. Not found in heart, liver, spleen and testis. Relatively highly expressed in fetal brain. Isoform LMX1A-4AB is expressed in testis.

It is found in the nucleus. Its function is as follows. Acts as a transcriptional activator by binding to an A/T-rich sequence, the FLAT element, in the insulin gene promoter. Required for development of the roof plate and, in turn, for specification of dorsal cell fates in the CNS and developing vertebrae. This Homo sapiens (Human) protein is LIM homeobox transcription factor 1-alpha (LMX1A).